Reading from the N-terminus, the 94-residue chain is Translation initiation factor IF-1 (94 aa).

In terms of domain architecture, S1-like spans 1-72 (MAKEELIQFE…EKGRLIFRHK (72 aa)). The interval 71 to 94 (HKDERPGGTGAPRGAPPRGQFRRR) is disordered. Positions 82 to 94 (PRGAPPRGQFRRR) are enriched in low complexity.

The protein belongs to the IF-1 family. Component of the 30S ribosomal translation pre-initiation complex which assembles on the 30S ribosome in the order IF-2 and IF-3, IF-1 and N-formylmethionyl-tRNA(fMet); mRNA recruitment can occur at any time during PIC assembly.

It localises to the cytoplasm. Functionally, one of the essential components for the initiation of protein synthesis. Stabilizes the binding of IF-2 and IF-3 on the 30S subunit to which N-formylmethionyl-tRNA(fMet) subsequently binds. Helps modulate mRNA selection, yielding the 30S pre-initiation complex (PIC). Upon addition of the 50S ribosomal subunit IF-1, IF-2 and IF-3 are released leaving the mature 70S translation initiation complex. The polypeptide is Translation initiation factor IF-1 (Rhodopseudomonas palustris (strain BisB5)).